Consider the following 113-residue polypeptide: Large ribosomal subunit protein uL22 (113 aa).

Belongs to the universal ribosomal protein uL22 family. In terms of assembly, part of the 50S ribosomal subunit.

In terms of biological role, this protein binds specifically to 23S rRNA; its binding is stimulated by other ribosomal proteins, e.g. L4, L17, and L20. It is important during the early stages of 50S assembly. It makes multiple contacts with different domains of the 23S rRNA in the assembled 50S subunit and ribosome. The globular domain of the protein is located near the polypeptide exit tunnel on the outside of the subunit, while an extended beta-hairpin is found that lines the wall of the exit tunnel in the center of the 70S ribosome. In Xylella fastidiosa (strain M12), this protein is Large ribosomal subunit protein uL22.